The sequence spans 31 residues: Putative translational regulatory protein ArgL (31 aa).

Its function is as follows. May serve a regulatory role in expression of downstream gene argF; in an argL-argF-lacZ fusion mutation of the start codon to a stop codon in argL increases expression of beta-galactosidase. This chain is Putative translational regulatory protein ArgL, found in Escherichia coli (strain K12).